Here is a 991-residue protein sequence, read N- to C-terminus: 5'-3' exoribonuclease 2 (991 aa).

The Nuclear localization signal motif lies at 264-268 (TKKTK). Over residues 404-418 (RRNENYRRRQQRESN) the composition is skewed to basic and acidic residues. Disordered stretches follow at residues 404–461 (RRNE…TQKI), 547–582 (SIESSTPVVHPIDTKVSNVGQKRKAPDSTEENENTD), and 872–991 (AERS…NGYY). Over residues 433 to 452 (SVETQSTEVVTSSKSTSVDT) the composition is skewed to low complexity. 2 stretches are compositionally biased toward low complexity: residues 878 to 889 (SRRNNGNSYRGG) and 896 to 910 (RRSYQSQSYSSRQSY). Residues 926–938 (WSGNGNFPRSNAS) are compositionally biased toward polar residues. Residues 946–958 (EGYGGRSRGGGYS) are compositionally biased toward gly residues. Polar residues predominate over residues 980-991 (ESYNNNNRNGYY).

It belongs to the 5'-3' exonuclease family. XRN2/RAT1 subfamily. In terms of assembly, interacts with din1/rai1; the interaction is direct, stabilizes dhp1 protein structure and may stimulate its exoribonuclease activity. The interaction also stimulates din1 pyrophosphohydrolase activity, probably by recruiting it to mRNA substrates.

The protein resides in the nucleus. In terms of biological role, possesses 5'-&gt;3' exoribonuclease activity. Required for the processing of nuclear mRNA and rRNA precursors. May promote the termination of transcription by RNA polymerase II. Essential for vegetative cell growth and chromosome segregation. This is 5'-3' exoribonuclease 2 (dhp1) from Schizosaccharomyces pombe (strain 972 / ATCC 24843) (Fission yeast).